The sequence spans 148 residues: Large ribosomal subunit protein uL13 (148 aa).

It belongs to the universal ribosomal protein uL13 family. As to quaternary structure, part of the 50S ribosomal subunit.

In terms of biological role, this protein is one of the early assembly proteins of the 50S ribosomal subunit, although it is not seen to bind rRNA by itself. It is important during the early stages of 50S assembly. In Oenococcus oeni (strain ATCC BAA-331 / PSU-1), this protein is Large ribosomal subunit protein uL13.